A 377-amino-acid polypeptide reads, in one-letter code: Polar flagellin F (377 aa).

Coiled coils occupy residues 98-131 and 302-339; these read QSAN…ETTS and DSQR…IQDT.

This sequence belongs to the bacterial flagellin family. As to quaternary structure, heteromer of multiple flagellin subunits including FlaA, FlaB/D, FlaC, FlaE and FlaF.

It is found in the secreted. The protein localises to the bacterial flagellum. In terms of biological role, flagellin is the subunit protein which polymerizes to form the filaments of bacterial flagella. This chain is Polar flagellin F (flaF), found in Vibrio parahaemolyticus serotype O3:K6 (strain RIMD 2210633).